The sequence spans 448 residues: Tubulin alpha chain, nucleomorph (448 aa).

GTP is bound by residues Gln-11, Glu-71, Ser-140, Gly-144, Thr-145, Thr-179, Asn-206, and Asn-228. Position 71 (Glu-71) interacts with Mg(2+). Glu-254 is a catalytic residue.

The protein belongs to the tubulin family. Dimer of alpha and beta chains. A typical microtubule is a hollow water-filled tube with an outer diameter of 25 nm and an inner diameter of 15 nM. Alpha-beta heterodimers associate head-to-tail to form protofilaments running lengthwise along the microtubule wall with the beta-tubulin subunit facing the microtubule plus end conferring a structural polarity. Microtubules usually have 13 protofilaments but different protofilament numbers can be found in some organisms and specialized cells. It depends on Mg(2+) as a cofactor.

The enzyme catalyses GTP + H2O = GDP + phosphate + H(+). Tubulin is the major constituent of microtubules, a cylinder consisting of laterally associated linear protofilaments composed of alpha- and beta-tubulin heterodimers. Microtubules grow by the addition of GTP-tubulin dimers to the microtubule end, where a stabilizing cap forms. Below the cap, tubulin dimers are in GDP-bound state, owing to GTPase activity of alpha-tubulin. The chain is Tubulin alpha chain, nucleomorph (tubA) from Guillardia theta (Cryptophyte).